We begin with the raw amino-acid sequence, 480 residues long: Immune evasion protein OPG047 (480 aa).

One can recognise a BTB domain in the interval 10 to 90 (CKNILALSMT…SYTGKVYIDS (81 aa)). Positions 125-223 (CVECYMMGIE…NYLSPRGINN (99 aa)) constitute a BACK domain. Kelch repeat units lie at residues 273-319 (VVYL…PANN), 320-363 (KLYV…SINN), 365-408 (IYVM…VFGR), 410-447 (LFLV…IVDN), and 448-480 (KLLL…WDGK).

The protein belongs to the orthopoxvirus OPG047 family.

Functionally, might have a role in the suppression of host immune response. The chain is Immune evasion protein OPG047 (OPG047) from Vaccinia virus (strain Western Reserve) (VACV).